The following is a 183-amino-acid chain: Glutathione-regulated potassium-efflux system ancillary protein KefG (183 aa).

The protein belongs to the NAD(P)H dehydrogenase (quinone) family. KefG subfamily. In terms of assembly, interacts with KefB.

The protein resides in the cell inner membrane. It catalyses the reaction a quinone + NADH + H(+) = a quinol + NAD(+). The enzyme catalyses a quinone + NADPH + H(+) = a quinol + NADP(+). Regulatory subunit of a potassium efflux system that confers protection against electrophiles. Required for full activity of KefB. This chain is Glutathione-regulated potassium-efflux system ancillary protein KefG, found in Salmonella paratyphi C (strain RKS4594).